Here is a 431-residue protein sequence, read N- to C-terminus: Gamma-glutamyl phosphate reductase (431 aa).

Belongs to the gamma-glutamyl phosphate reductase family.

The protein resides in the cytoplasm. The enzyme catalyses L-glutamate 5-semialdehyde + phosphate + NADP(+) = L-glutamyl 5-phosphate + NADPH + H(+). Its pathway is amino-acid biosynthesis; L-proline biosynthesis; L-glutamate 5-semialdehyde from L-glutamate: step 2/2. In terms of biological role, catalyzes the NADPH-dependent reduction of L-glutamate 5-phosphate into L-glutamate 5-semialdehyde and phosphate. The product spontaneously undergoes cyclization to form 1-pyrroline-5-carboxylate. In Acetivibrio thermocellus (strain ATCC 27405 / DSM 1237 / JCM 9322 / NBRC 103400 / NCIMB 10682 / NRRL B-4536 / VPI 7372) (Clostridium thermocellum), this protein is Gamma-glutamyl phosphate reductase.